An 891-amino-acid chain; its full sequence is Alanine--tRNA ligase (891 aa).

His576, His580, Cys684, and His688 together coordinate Zn(2+).

It belongs to the class-II aminoacyl-tRNA synthetase family. It depends on Zn(2+) as a cofactor.

The protein resides in the cytoplasm. The catalysed reaction is tRNA(Ala) + L-alanine + ATP = L-alanyl-tRNA(Ala) + AMP + diphosphate. Functionally, catalyzes the attachment of alanine to tRNA(Ala) in a two-step reaction: alanine is first activated by ATP to form Ala-AMP and then transferred to the acceptor end of tRNA(Ala). Also edits incorrectly charged Ser-tRNA(Ala) and Gly-tRNA(Ala) via its editing domain. This is Alanine--tRNA ligase from Orientia tsutsugamushi (strain Boryong) (Rickettsia tsutsugamushi).